We begin with the raw amino-acid sequence, 207 residues long: Guanylate kinase (207 aa).

Positions 6–185 constitute a Guanylate kinase-like domain; the sequence is GLLIVLSGPS…AKNRIQSIVE (180 aa). ATP is bound at residue 13-20; the sequence is GPSGVGKG.

Belongs to the guanylate kinase family.

It localises to the cytoplasm. It catalyses the reaction GMP + ATP = GDP + ADP. Its function is as follows. Essential for recycling GMP and indirectly, cGMP. This is Guanylate kinase from Staphylococcus epidermidis (strain ATCC 35984 / DSM 28319 / BCRC 17069 / CCUG 31568 / BM 3577 / RP62A).